Reading from the N-terminus, the 194-residue chain is Imidazoleglycerol-phosphate dehydratase (194 aa).

The protein belongs to the imidazoleglycerol-phosphate dehydratase family.

The protein resides in the cytoplasm. The enzyme catalyses D-erythro-1-(imidazol-4-yl)glycerol 3-phosphate = 3-(imidazol-4-yl)-2-oxopropyl phosphate + H2O. It functions in the pathway amino-acid biosynthesis; L-histidine biosynthesis; L-histidine from 5-phospho-alpha-D-ribose 1-diphosphate: step 6/9. The protein is Imidazoleglycerol-phosphate dehydratase of Caldicellulosiruptor bescii (strain ATCC BAA-1888 / DSM 6725 / KCTC 15123 / Z-1320) (Anaerocellum thermophilum).